The following is a 203-amino-acid chain: Snake venom metalloproteinase adamalysin-2 (203 aa).

The Peptidase M12B domain maps to 7 to 203 (RYIELVVVAD…YKPQCILNKP (197 aa)). Ca(2+) is bound by residues E10 and D94. Cystine bridges form between C118/C198 and C158/C165. Position 143 (H143) interacts with Zn(2+). The active site involves E144. H147 and H153 together coordinate Zn(2+). Ca(2+)-binding residues include C198 and N201.

It belongs to the venom metalloproteinase (M12B) family. P-I subfamily. In terms of assembly, monomer. Zn(2+) is required as a cofactor. In terms of tissue distribution, expressed by the venom gland.

The protein localises to the secreted. The catalysed reaction is Cleavage of 1-Phe-|-Val-2, 5-His-|-Leu-6, 14-Ala-|-Leu-15, 15-Leu-|-Tyr-16, and 16-Tyr-|-Leu-17 of insulin B chain.. Its function is as follows. Has no significant hemorrhagic activity, but inactivates serpins by limited proteolysis of their reactive-site loops. The chain is Snake venom metalloproteinase adamalysin-2 from Crotalus adamanteus (Eastern diamondback rattlesnake).